The following is a 426-amino-acid chain: Histidine--tRNA ligase (426 aa).

This sequence belongs to the class-II aminoacyl-tRNA synthetase family. Homodimer.

The protein localises to the cytoplasm. It carries out the reaction tRNA(His) + L-histidine + ATP = L-histidyl-tRNA(His) + AMP + diphosphate + H(+). The sequence is that of Histidine--tRNA ligase from Streptococcus pyogenes serotype M6 (strain ATCC BAA-946 / MGAS10394).